The primary structure comprises 103 residues: Small ribosomal subunit protein uS10 (103 aa).

It belongs to the universal ribosomal protein uS10 family. In terms of assembly, part of the 30S ribosomal subunit.

Involved in the binding of tRNA to the ribosomes. This is Small ribosomal subunit protein uS10 from Burkholderia mallei (strain NCTC 10247).